Reading from the N-terminus, the 122-residue chain is MIQMQTNLDVADNSGARRVQCIKVLGGSHRTIATVGDVIVVSIKEAIPRGRVKKGDVHRAVIVRTAKEIRRADGSAIRFDTNAAVLINKQGEPIGTRIFGPVTRELRGKKFMKIISLAPEVL.

Belongs to the universal ribosomal protein uL14 family. In terms of assembly, part of the 50S ribosomal subunit. Forms a cluster with proteins L3 and L19. In the 70S ribosome, L14 and L19 interact and together make contacts with the 16S rRNA in bridges B5 and B8.

In terms of biological role, binds to 23S rRNA. Forms part of two intersubunit bridges in the 70S ribosome. The protein is Large ribosomal subunit protein uL14 of Paramagnetospirillum magneticum (strain ATCC 700264 / AMB-1) (Magnetospirillum magneticum).